Reading from the N-terminus, the 267-residue chain is GTP cyclohydrolase FolE2 (267 aa).

This sequence belongs to the GTP cyclohydrolase IV family.

It catalyses the reaction GTP + H2O = 7,8-dihydroneopterin 3'-triphosphate + formate + H(+). The protein operates within cofactor biosynthesis; 7,8-dihydroneopterin triphosphate biosynthesis; 7,8-dihydroneopterin triphosphate from GTP: step 1/1. Converts GTP to 7,8-dihydroneopterin triphosphate. The protein is GTP cyclohydrolase FolE2 of Nitrosococcus oceani (strain ATCC 19707 / BCRC 17464 / JCM 30415 / NCIMB 11848 / C-107).